Reading from the N-terminus, the 109-residue chain is Large ribosomal subunit protein uL22 (109 aa).

Belongs to the universal ribosomal protein uL22 family. As to quaternary structure, part of the 50S ribosomal subunit.

This protein binds specifically to 23S rRNA; its binding is stimulated by other ribosomal proteins, e.g. L4, L17, and L20. It is important during the early stages of 50S assembly. It makes multiple contacts with different domains of the 23S rRNA in the assembled 50S subunit and ribosome. Functionally, the globular domain of the protein is located near the polypeptide exit tunnel on the outside of the subunit, while an extended beta-hairpin is found that lines the wall of the exit tunnel in the center of the 70S ribosome. This chain is Large ribosomal subunit protein uL22, found in Herminiimonas arsenicoxydans.